An 87-amino-acid polypeptide reads, in one-letter code: Large ribosomal subunit protein bL27 (87 aa).

Belongs to the bacterial ribosomal protein bL27 family.

This is Large ribosomal subunit protein bL27 from Renibacterium salmoninarum (strain ATCC 33209 / DSM 20767 / JCM 11484 / NBRC 15589 / NCIMB 2235).